The sequence spans 166 residues: Regulatory protein RecX (166 aa).

It belongs to the RecX family.

The protein localises to the cytoplasm. Its function is as follows. Modulates RecA activity. This chain is Regulatory protein RecX, found in Shigella sonnei (strain Ss046).